The chain runs to 195 residues: MARLILFGPPGAGKGTQAKHLVDLLDIPHISTGDIFRAAVRNQTPLGQQVQAYLDSGRLVPDELTINLIQERLHQSDVQKGWILDGFPRTLAQAEALEKLLHQINQPYDRVLSLTVPEEVLTQRLVLRAEKESRKDDTPEVIQKRLGVYWKDTAPLLDFYRNQQRLATIDGNQPESDVTAQIQHIVDQLKGEKIV.

An ATP-binding site is contributed by 11–16 (GAGKGT). An NMP region spans residues 31–60 (STGDIFRAAVRNQTPLGQQVQAYLDSGRLV). AMP-binding positions include Thr-32, Arg-37, 58–60 (RLV), 86–89 (GFPR), and Gln-93. The tract at residues 127–137 (LRAEKESRKDD) is LID. Arg-128 provides a ligand contact to ATP. Arg-134 and Arg-145 together coordinate AMP. Gln-173 is an ATP binding site.

Belongs to the adenylate kinase family. As to quaternary structure, monomer.

It localises to the cytoplasm. It carries out the reaction AMP + ATP = 2 ADP. It participates in purine metabolism; AMP biosynthesis via salvage pathway; AMP from ADP: step 1/1. Functionally, catalyzes the reversible transfer of the terminal phosphate group between ATP and AMP. Plays an important role in cellular energy homeostasis and in adenine nucleotide metabolism. The polypeptide is Adenylate kinase (Cyanothece sp. (strain PCC 7425 / ATCC 29141)).